The following is a 393-amino-acid chain: Major outer membrane porin, serovar D (393 aa).

The N-terminal stretch at 1–22 is a signal peptide; the sequence is MKKLLKSVLVFAALSSASSLQA.

The protein belongs to the chlamydial porin (CP) (TC 1.B.2) family. As to quaternary structure, part of a disulfide cross-linked outer membrane complex (COMC) composed of the major outer membrane porin (MOMP), the small cysteine-rich protein (OmcA) and the large cysteine-rich periplasmic protein (OmcB).

Its subcellular location is the cell outer membrane. Functionally, in elementary bodies (EBs, the infectious stage, which is able to survive outside the host cell) provides the structural integrity of the outer envelope through disulfide cross-links with the small cysteine-rich protein and the large cysteine-rich periplasmic protein. It has been described in publications as the Sarkosyl-insoluble COMC (Chlamydia outer membrane complex), and serves as the functional equivalent of peptidoglycan. Its function is as follows. Permits diffusion of specific solutes through the outer membrane. In Chlamydia trachomatis serovar D (strain ATCC VR-885 / DSM 19411 / UW-3/Cx), this protein is Major outer membrane porin, serovar D (ompA).